The following is a 98-amino-acid chain: Large ribosomal subunit protein bL28 (98 aa).

In terms of assembly, part of the 50S ribosomal subunit.

This is Large ribosomal subunit protein bL28 (rpmB) from Thermus thermophilus (strain ATCC 27634 / DSM 579 / HB8).